The primary structure comprises 696 residues: Glycine--tRNA ligase beta subunit (696 aa).

The protein belongs to the class-II aminoacyl-tRNA synthetase family. Tetramer of two alpha and two beta subunits.

It localises to the cytoplasm. It carries out the reaction tRNA(Gly) + glycine + ATP = glycyl-tRNA(Gly) + AMP + diphosphate. The chain is Glycine--tRNA ligase beta subunit from Nitratidesulfovibrio vulgaris (strain DP4) (Desulfovibrio vulgaris).